The chain runs to 482 residues: Lipoamide acyltransferase component of branched-chain alpha-keto acid dehydrogenase complex, mitochondrial (482 aa).

The N-terminal 61 residues, M1–Q61, are a transit peptide targeting the mitochondrion. The Lipoyl-binding domain maps to I64 to E139. K105 bears the N6-lipoyllysine mark. K133 carries the N6-succinyllysine modification. The critical for association with PPM1K stretch occupies residues D145 to E160. The disordered stretch occupies residues S146–T171. Residues S157 to G168 are compositionally biased toward basic and acidic residues. The Peripheral subunit-binding (PSBD) domain maps to L172–L209. Position 196 is an N6-acetyllysine; alternate (K196). Position 196 is an N6-succinyllysine; alternate (K196). K202 is modified (N6-acetyllysine). Over residues P218–P230 the composition is skewed to pro residues. A disordered region spans residues P218 to P238. S220 bears the Phosphoserine mark. An N6-acetyllysine mark is found at K243 and K250. Position 261 is an N6-succinyllysine (K261). K289 carries the N6-acetyllysine; alternate modification. At K289 the chain carries N6-succinyllysine; alternate. R291 serves as a coordination point for CoA. 2 positions are modified to N6-acetyllysine: K295 and K304. S306, D349, Q378, S399, N400, S403, G424, and I426 together coordinate CoA. K435 is modified (N6-acetyllysine). Position 440 is an N6-acetyllysine; alternate (K440). K440 is subject to N6-succinyllysine; alternate. Active-site residues include H452 and D456.

The protein belongs to the 2-oxoacid dehydrogenase family. Forms a 24-polypeptide structural core with octahedral symmetry that represents the E2 component of the branched-chain alpha-ketoacid dehydrogenase (BCKDH) complex. The BCKDH complex is composed of three major building blocks E1, E2 and E3. It is organized around E2, a 24-meric cubic core composed of DBT, to which are associated 6 to 12 copies of E1, and approximately 6 copies of the dehydrogenase E3, a DLD dimer. Interacts with PPM1K with a 24:1 stoichiometry; the N-terminal region (residues 49-61) of PPM1K and C-terminal linker of the lipoyl domain of DBT/E2 (residues 145-160) are critical for this interaction whereas the lipoyl prosthetic group is dispensable. This interaction requires colocalization in mitochondria. PPM1K competes with BCKDK for binding to DBT; this interaction is modulated by branched-chain alpha-keto acids (BCKAs). At steady state, BCKDH holoenzyme preferentially binds BCKDK and BCKDHA is phosphorylated. In response to high levels of BCKAs, BCKDK is replaced by PPM1K leading to BCKDHA dephosphorylation. (R)-lipoate serves as cofactor. As to expression, expressed in kidney (at protein level).

It localises to the mitochondrion matrix. It carries out the reaction N(6)-[(R)-dihydrolipoyl]-L-lysyl-[protein] + 2-methylpropanoyl-CoA = N(6)-[(R)-S(8)-2-methylpropanoyldihydrolipoyl]-L-lysyl-[protein] + CoA. In terms of biological role, the branched-chain alpha-keto dehydrogenase complex catalyzes the overall conversion of alpha-keto acids to acyl-CoA and CO(2). It contains multiple copies of three enzymatic components: branched-chain alpha-keto acid decarboxylase (E1), lipoamide acyltransferase (E2) and lipoamide dehydrogenase (E3). Within this complex, the catalytic function of this enzyme is to accept, and to transfer to coenzyme A, acyl groups that are generated by the branched-chain alpha-keto acid decarboxylase component. In Bos taurus (Bovine), this protein is Lipoamide acyltransferase component of branched-chain alpha-keto acid dehydrogenase complex, mitochondrial (DBT).